We begin with the raw amino-acid sequence, 764 residues long: Subtilisin-like protease SBT1.6 (764 aa).

Positions 1-20 (MASSTIVLLLFLSFPFISFA) are cleaved as a signal peptide. An Inhibitor I9 domain is found at 46–99 (HWYSTEFAEESRIVHVYHTVFHGFSAVVTPDEADNLRNHPAVLAVFEDRRRELH). One can recognise a Peptidase S8 domain in the interval 103–606 (SPQFLGLQNQ…SGHLNLGRAM (504 aa)). Residue Asp-131 is the Charge relay system of the active site. An N-linked (GlcNAc...) asparagine glycan is attached at Asn-191. His-205 functions as the Charge relay system in the catalytic mechanism. The PA domain maps to 377–457 (SSASLCMENT…NEGDRIKAYA (81 aa)). Ser-538 functions as the Charge relay system in the catalytic mechanism. Asn-578 is a glycosylation site (N-linked (GlcNAc...) asparagine).

This sequence belongs to the peptidase S8 family. In terms of tissue distribution, expressed in roots, leaves and flowers of mature plants.

The polypeptide is Subtilisin-like protease SBT1.6 (Arabidopsis thaliana (Mouse-ear cress)).